Consider the following 124-residue polypeptide: Cytochrome c2 (124 aa).

Pyrrolidone carboxylic acid is present on Q1. 4 residues coordinate heme c: C16, C19, H20, and M85.

It belongs to the cytochrome c family. Post-translationally, binds 1 heme c group covalently per subunit.

It localises to the periplasm. In terms of biological role, cytochrome c2 is found mainly in purple, non-sulfur, photosynthetic bacteria where it functions as the electron donor to the oxidized bacteriochlorophyll in the photophosphorylation pathway. However, it may also have a role in the respiratory chain and is found in some non-photosynthetic bacteria. The polypeptide is Cytochrome c2 (Afifella marina (Rhodobium marinum)).